Consider the following 426-residue polypeptide: Pyrophosphate--fructose 6-phosphate 1-phosphotransferase 2 (426 aa).

Gly-15 contacts diphosphate. Asp-114 provides a ligand contact to Mg(2+). Residues 140-142, 186-188, Glu-247, and 308-311 contribute to the substrate site; these read TID, MGR, and YELR. The active-site Proton acceptor is Asp-142.

This sequence belongs to the phosphofructokinase type A (PFKA) family. PPi-dependent PFK group II subfamily. Clade 'Short' sub-subfamily. As to quaternary structure, homotetramer. It depends on Mg(2+) as a cofactor.

Its subcellular location is the cytoplasm. It carries out the reaction beta-D-fructose 6-phosphate + diphosphate = beta-D-fructose 1,6-bisphosphate + phosphate + H(+). The protein operates within carbohydrate degradation; glycolysis; D-glyceraldehyde 3-phosphate and glycerone phosphate from D-glucose: step 3/4. With respect to regulation, non-allosteric. Catalyzes the phosphorylation of D-fructose 6-phosphate, the first committing step of glycolysis. Uses inorganic phosphate (PPi) as phosphoryl donor instead of ATP like common ATP-dependent phosphofructokinases (ATP-PFKs), which renders the reaction reversible, and can thus function both in glycolysis and gluconeogenesis. Consistently, PPi-PFK can replace the enzymes of both the forward (ATP-PFK) and reverse (fructose-bisphosphatase (FBPase)) reactions. The sequence is that of Pyrophosphate--fructose 6-phosphate 1-phosphotransferase 2 (pfk2) from Trichomonas vaginalis (strain ATCC PRA-98 / G3).